The following is a 62-amino-acid chain: Rubredoxin-2 (62 aa).

A Rubredoxin-like domain is found at 7 to 58 (MWRCQMVNCGYVYDPDRGDKRRKVPAGTKFEDLPEDWRCPVCGAGKKSFRRL). The Fe cation site is built by C10, C15, C45, and C48.

This sequence belongs to the rubredoxin family. As to quaternary structure, monomer. It depends on Fe(3+) as a cofactor.

Rubredoxin is a small nonheme, iron protein lacking acid-labile sulfide. Its single Fe, chelated to 4 Cys, functions as an electron acceptor and may also stabilize the conformation of the molecule. In Desulfovibrio desulfuricans (strain ATCC 27774 / DSM 6949 / MB), this protein is Rubredoxin-2 (rd2).